A 124-amino-acid chain; its full sequence is Large ribosomal subunit protein bL12 (124 aa).

The protein belongs to the bacterial ribosomal protein bL12 family. Homodimer. Part of the ribosomal stalk of the 50S ribosomal subunit. Forms a multimeric L10(L12)X complex, where L10 forms an elongated spine to which 2 to 4 L12 dimers bind in a sequential fashion. Binds GTP-bound translation factors.

Its function is as follows. Forms part of the ribosomal stalk which helps the ribosome interact with GTP-bound translation factors. Is thus essential for accurate translation. This Cupriavidus metallidurans (strain ATCC 43123 / DSM 2839 / NBRC 102507 / CH34) (Ralstonia metallidurans) protein is Large ribosomal subunit protein bL12.